The sequence spans 329 residues: GTP 3',8-cyclase (329 aa).

Residues 8 to 234 (AFARKFYYLR…QLRQRSDGPA (227 aa)) form the Radical SAM core domain. Position 17 (Arg-17) interacts with GTP. [4Fe-4S] cluster-binding residues include Cys-24 and Cys-28. S-adenosyl-L-methionine is bound at residue Tyr-30. Cys-31 is a binding site for [4Fe-4S] cluster. Position 68 (Arg-68) interacts with GTP. Gly-72 provides a ligand contact to S-adenosyl-L-methionine. Thr-99 serves as a coordination point for GTP. Position 123 (Ser-123) interacts with S-adenosyl-L-methionine. Lys-160 contacts GTP. Met-194 lines the S-adenosyl-L-methionine pocket. [4Fe-4S] cluster contacts are provided by Cys-257 and Cys-260. Residue 262-264 (RLR) participates in GTP binding. [4Fe-4S] cluster is bound at residue Cys-274.

This sequence belongs to the radical SAM superfamily. MoaA family. In terms of assembly, monomer and homodimer. [4Fe-4S] cluster is required as a cofactor.

The enzyme catalyses GTP + AH2 + S-adenosyl-L-methionine = (8S)-3',8-cyclo-7,8-dihydroguanosine 5'-triphosphate + 5'-deoxyadenosine + L-methionine + A + H(+). It functions in the pathway cofactor biosynthesis; molybdopterin biosynthesis. Its function is as follows. Catalyzes the cyclization of GTP to (8S)-3',8-cyclo-7,8-dihydroguanosine 5'-triphosphate. The protein is GTP 3',8-cyclase of Escherichia coli O7:K1 (strain IAI39 / ExPEC).